We begin with the raw amino-acid sequence, 351 residues long: Soluble interferon alpha/beta receptor OPG204 (351 aa).

Positions 1–23 are cleaved as a signal peptide; the sequence is MKMKMMVRIYFVSLSLLLFHSYA. 2 Ig-like C2-type domains span residues 65 to 137 and 155 to 237; these read LGEP…KNGD and PKTY…IVVS. 2 cysteine pairs are disulfide-bonded: C73–C129 and C172–C221. 5 N-linked (GlcNAc...) asparagine; by host glycosylation sites follow: N117, N182, N261, N269, and N321. The Ig-like V-type domain maps to 246–345; sequence PSQDHRFKLI…HNYYFDKTLT (100 aa). The cysteines at positions 272 and 333 are disulfide-linked.

Belongs to the interleukin-1 receptor family. Interacts with host IFNA1.

It localises to the secreted. Functionally, counteracts the antiviral effects of host IFN-alpha/beta and key IFN-inducible proteins involved in viral RNA degradation suxh as host OAS1. Acts as a soluble IFN-alpha receptor and thus inhibits the interaction between host IFN-alpha and its receptor. The chain is Soluble interferon alpha/beta receptor OPG204 (OPG204) from Cynomys gunnisoni (Gunnison's prairie dog).